A 372-amino-acid chain; its full sequence is tRNA-specific 2-thiouridylase MnmA (372 aa).

Residues 16-23 and methionine 42 each bind ATP; that span reads GMSGGVDS. The tract at residues 102–104 is interaction with target base in tRNA; the sequence is NPD. The active-site Nucleophile is cysteine 107. Cysteines 107 and 205 form a disulfide. Glycine 132 is an ATP binding site. The interaction with tRNA stretch occupies residues 155–157; that stretch reads KDQ. The active-site Cysteine persulfide intermediate is the cysteine 205. The interval 317–318 is interaction with tRNA; it reads RY.

This sequence belongs to the MnmA/TRMU family.

It localises to the cytoplasm. The catalysed reaction is S-sulfanyl-L-cysteinyl-[protein] + uridine(34) in tRNA + AH2 + ATP = 2-thiouridine(34) in tRNA + L-cysteinyl-[protein] + A + AMP + diphosphate + H(+). In terms of biological role, catalyzes the 2-thiolation of uridine at the wobble position (U34) of tRNA, leading to the formation of s(2)U34. This chain is tRNA-specific 2-thiouridylase MnmA, found in Shewanella baltica (strain OS223).